The chain runs to 383 residues: Vesicle-associated membrane protein-associated protein scs2 (383 aa).

The 123-residue stretch at 1-123 folds into the MSP domain; it reads MSVECSGELF…SIFDRKIRCV (123 aa). Residues 1-362 lie on the Cytoplasmic side of the membrane; it reads MSVECSGELF…TGASLTESPG (362 aa). The segment covering 127 to 146 has biased composition (polar residues); sequence KQPPQSADKQVENTSTSNPP. 2 disordered regions span residues 127-160 and 233-359; these read KQPP…SSVG and ESAS…SLTE. Residues serine 236, serine 237, serine 259, serine 261, and serine 268 each carry the phosphoserine modification. Basic and acidic residues predominate over residues 241–263; it reads DVARSKVQDIIDNEIPKPSESPR. The segment covering 289-300 has biased composition (basic and acidic residues); sequence FDTKKNDFDSKL. Over residues 347–359 the composition is skewed to polar residues; sequence ADPSSSTGASLTE. The chain crosses the membrane as a helical; Anchor for type IV membrane protein span at residues 363–383; that stretch reads IPPNIVIILCLIFFLIGYLFF.

This sequence belongs to the VAMP-associated protein (VAP) (TC 9.B.17) family. As to quaternary structure, interacts (via MSP domain) with duc1 (via FFAT-motif); the interaction is direct and serves to restrict the localization of duc1 to areas of cell membrane-endoplasmic reticulum contact sites, and away from the cell division site. Interacts with epr1.

It localises to the endoplasmic reticulum membrane. Functionally, vesicle-associated membrane protein-associated protein (VAP) implicated in maintaining the cortical endoplasmic reticulum (ER)-plasma membrane (PM) attachment. ER-PM contacts function to modulate the distribution of contractile ring components to ensure robust ring assembly. ER-PM contacts function also in controlling exocytosis and maintenance of cell polarity regulating cell shape. VAPs play an important role in regulating eisosome assembly. VAPs also contribute to ER-phagy by tethering atg8 to the ER membrane, but also by maintaining the ER-plasma membrane contact. Restricts the localization of duc1 away from the site of cell division. The sequence is that of Vesicle-associated membrane protein-associated protein scs2 (scs2) from Schizosaccharomyces pombe (strain 972 / ATCC 24843) (Fission yeast).